The sequence spans 559 residues: Inositol-3-phosphate synthase 1 (559 aa).

Positions 67, 68, 69, 70, 141, 177, 178, 188, 191, 228, 229, 230, 231, 278, 279, 303, 306, 337, 338, 339, and 352 each coordinate NAD(+). The residue at position 279 (serine 279) is a Phosphoserine. At serine 357 the chain carries Phosphoserine. NAD(+) is bound by residues glycine 390, aspartate 391, aspartate 419, and serine 420.

Belongs to the myo-inositol 1-phosphate synthase family. NAD(+) is required as a cofactor.

The protein localises to the cytoplasm. The catalysed reaction is D-glucose 6-phosphate = 1D-myo-inositol 3-phosphate. It functions in the pathway polyol metabolism; myo-inositol biosynthesis; myo-inositol from D-glucose 6-phosphate: step 1/2. Its function is as follows. Key enzyme in myo-inositol biosynthesis pathway that catalyzes the conversion of glucose 6-phosphate to 1-myo-inositol 1-phosphate in a NAD-dependent manner. Rate-limiting enzyme in the synthesis of all inositol-containing compounds. This Macaca fascicularis (Crab-eating macaque) protein is Inositol-3-phosphate synthase 1 (ISYNA1).